The following is a 351-amino-acid chain: Dual-specificity RNA methyltransferase RlmN (351 aa).

Catalysis depends on Glu-90, which acts as the Proton acceptor. Residues 96–330 enclose the Radical SAM core domain; it reads EKDHYTACLS…ATLRKSKGSD (235 aa). Cys-103 and Cys-335 are disulfide-bonded. Residues Cys-110, Cys-114, and Cys-117 each coordinate [4Fe-4S] cluster. S-adenosyl-L-methionine is bound by residues 162–163, Ser-194, 216–218, and Asn-292; these read GE and SLH. Cys-335 serves as the catalytic S-methylcysteine intermediate.

It belongs to the radical SAM superfamily. RlmN family. Requires [4Fe-4S] cluster as cofactor.

Its subcellular location is the cytoplasm. It catalyses the reaction adenosine(2503) in 23S rRNA + 2 reduced [2Fe-2S]-[ferredoxin] + 2 S-adenosyl-L-methionine = 2-methyladenosine(2503) in 23S rRNA + 5'-deoxyadenosine + L-methionine + 2 oxidized [2Fe-2S]-[ferredoxin] + S-adenosyl-L-homocysteine. The catalysed reaction is adenosine(37) in tRNA + 2 reduced [2Fe-2S]-[ferredoxin] + 2 S-adenosyl-L-methionine = 2-methyladenosine(37) in tRNA + 5'-deoxyadenosine + L-methionine + 2 oxidized [2Fe-2S]-[ferredoxin] + S-adenosyl-L-homocysteine. Functionally, specifically methylates position 2 of adenine 2503 in 23S rRNA and position 2 of adenine 37 in tRNAs. m2A2503 modification seems to play a crucial role in the proofreading step occurring at the peptidyl transferase center and thus would serve to optimize ribosomal fidelity. This chain is Dual-specificity RNA methyltransferase RlmN, found in Solidesulfovibrio magneticus (strain ATCC 700980 / DSM 13731 / RS-1) (Desulfovibrio magneticus).